Consider the following 193-residue polypeptide: dTTP/UTP pyrophosphatase (193 aa).

The active-site Proton acceptor is the aspartate 70.

Belongs to the Maf family. YhdE subfamily. Requires a divalent metal cation as cofactor.

Its subcellular location is the cytoplasm. The enzyme catalyses dTTP + H2O = dTMP + diphosphate + H(+). It carries out the reaction UTP + H2O = UMP + diphosphate + H(+). In terms of biological role, nucleoside triphosphate pyrophosphatase that hydrolyzes dTTP and UTP. May have a dual role in cell division arrest and in preventing the incorporation of modified nucleotides into cellular nucleic acids. This Ruminiclostridium cellulolyticum (strain ATCC 35319 / DSM 5812 / JCM 6584 / H10) (Clostridium cellulolyticum) protein is dTTP/UTP pyrophosphatase.